Here is a 121-residue protein sequence, read N- to C-terminus: MLTKKEQRLRRSRQTRIRIAQQGVARLTVNRTNLHIYANVISDDGSKVLASASTAEAEVRQSLGAAGKGGNAAAARIIGLRIAEKAKAAGIQKVAFDRAGFAYHGRVKALADAAREAGLQF.

Belongs to the universal ribosomal protein uL18 family. In terms of assembly, part of the 50S ribosomal subunit; part of the 5S rRNA/L5/L18/L25 subcomplex. Contacts the 5S and 23S rRNAs.

Its function is as follows. This is one of the proteins that bind and probably mediate the attachment of the 5S RNA into the large ribosomal subunit, where it forms part of the central protuberance. This Verminephrobacter eiseniae (strain EF01-2) protein is Large ribosomal subunit protein uL18.